Consider the following 595-residue polypeptide: DNA damage-binding protein CMR1 (595 aa).

Residues 20–79 (ALLDSLGLDPAGASSPFGSSPAPTSNKTKPKPKPAPKKRKAAAVIAVDEGPRRRSGRIAG) are disordered. The span at 29–46 (PAGASSPFGSSPAPTSNK) shows a compositional bias: low complexity. Residues 47-60 (TKPKPKPAPKKRKA) show a composition bias toward basic residues. 4 WD repeats span residues 185–226 (VTNE…MEKP), 255–297 (HAKN…ELFS), 300–339 (DEDL…RESG), and 349–389 (GRGA…SISS). The segment at 397–429 (AIEEEEEGTSTLSGQSSSLPHDTHPTRESDYST) is disordered. Low complexity predominate over residues 405 to 415 (TSTLSGQSSSL). Residues 417–426 (HDTHPTRESD) are compositionally biased toward basic and acidic residues. WD repeat units lie at residues 448–487 (QHGK…SLVD), 519–556 (LRAQ…VGLW), and 558–595 (DDVT…GDHI).

Belongs to the WD repeat DDB2/WDR76 family.

In terms of biological role, DNA-binding protein that binds to both single- and double-stranded DNA. Binds preferentially to UV-damaged DNA. May be involved in DNA-metabolic processes. The polypeptide is DNA damage-binding protein CMR1 (Cryptococcus neoformans var. neoformans serotype D (strain B-3501A) (Filobasidiella neoformans)).